The primary structure comprises 427 residues: Glutamate-1-semialdehyde 2,1-aminomutase (427 aa).

Lys265 carries the N6-(pyridoxal phosphate)lysine modification.

Belongs to the class-III pyridoxal-phosphate-dependent aminotransferase family. HemL subfamily. Homodimer. Requires pyridoxal 5'-phosphate as cofactor.

The protein resides in the cytoplasm. It catalyses the reaction (S)-4-amino-5-oxopentanoate = 5-aminolevulinate. Its pathway is porphyrin-containing compound metabolism; protoporphyrin-IX biosynthesis; 5-aminolevulinate from L-glutamyl-tRNA(Glu): step 2/2. The protein is Glutamate-1-semialdehyde 2,1-aminomutase of Burkholderia multivorans (strain ATCC 17616 / 249).